Consider the following 78-residue polypeptide: Sec-independent protein translocase protein TatA (78 aa).

A helical transmembrane segment spans residues 1-21 (MGGISIWQLLIIAVIVVLLFG). Basic and acidic residues predominate over residues 47–59 (ESEKKDADFEPKS). Positions 47-78 (ESEKKDADFEPKSLEQQSKQAATESKKDKEQA) are disordered. The segment covering 60–69 (LEQQSKQAAT) has biased composition (polar residues).

Belongs to the TatA/E family. As to quaternary structure, the Tat system comprises two distinct complexes: a TatABC complex, containing multiple copies of TatA, TatB and TatC subunits, and a separate TatA complex, containing only TatA subunits. Substrates initially bind to the TatABC complex, which probably triggers association of the separate TatA complex to form the active translocon.

It is found in the cell inner membrane. Functionally, part of the twin-arginine translocation (Tat) system that transports large folded proteins containing a characteristic twin-arginine motif in their signal peptide across membranes. TatA could form the protein-conducting channel of the Tat system. This is Sec-independent protein translocase protein TatA from Vibrio vulnificus (strain CMCP6).